A 130-amino-acid polypeptide reads, in one-letter code: Small ribosomal subunit protein uS9 (130 aa).

Positions 99-110 (KKAGFLTRDPRM) are enriched in basic and acidic residues. The tract at residues 99–130 (KKAGFLTRDPRMKERKKYGLKKARRAPQFSKR) is disordered. Residues 111-130 (KERKKYGLKKARRAPQFSKR) are compositionally biased toward basic residues.

Belongs to the universal ribosomal protein uS9 family.

In Clostridium botulinum (strain Eklund 17B / Type B), this protein is Small ribosomal subunit protein uS9.